A 474-amino-acid chain; its full sequence is Tubulin gamma-1 chain (474 aa).

A GTP-binding site is contributed by A142–G148.

Belongs to the tubulin family. In terms of assembly, gamma-tubulin complex is composed of gamma-tubulin and GCP proteins.

Its subcellular location is the cytoplasm. It localises to the cytoskeleton. The protein localises to the microtubule organizing center. The protein resides in the nucleus. It is found in the cell cortex. Tubulin is the major constituent of microtubules. The gamma chain is found at microtubule organizing centers (MTOC) such as the spindle poles, suggesting that it is involved in the minus-end nucleation of microtubule assembly. Functionally, gamma-tubulin complex is essential for the control of microtubular network remodeling in the course of initiation and development of giant-feeding cells, and for the successful reproduction of nematodes (e.g. Meloidogyne spp.) in their plant hosts. The chain is Tubulin gamma-1 chain (TUBG1) from Arabidopsis thaliana (Mouse-ear cress).